Consider the following 659-residue polypeptide: UvrABC system protein B (659 aa).

The Helicase ATP-binding domain maps to Q25–R412. G38–T45 provides a ligand contact to ATP. The Beta-hairpin signature appears at Y91–I114. The region spanning Q429–I582 is the Helicase C-terminal domain. The region spanning E622–N657 is the UVR domain.

It belongs to the UvrB family. In terms of assembly, forms a heterotetramer with UvrA during the search for lesions. Interacts with UvrC in an incision complex.

It is found in the cytoplasm. Its function is as follows. The UvrABC repair system catalyzes the recognition and processing of DNA lesions. A damage recognition complex composed of 2 UvrA and 2 UvrB subunits scans DNA for abnormalities. Upon binding of the UvrA(2)B(2) complex to a putative damaged site, the DNA wraps around one UvrB monomer. DNA wrap is dependent on ATP binding by UvrB and probably causes local melting of the DNA helix, facilitating insertion of UvrB beta-hairpin between the DNA strands. Then UvrB probes one DNA strand for the presence of a lesion. If a lesion is found the UvrA subunits dissociate and the UvrB-DNA preincision complex is formed. This complex is subsequently bound by UvrC and the second UvrB is released. If no lesion is found, the DNA wraps around the other UvrB subunit that will check the other stand for damage. This chain is UvrABC system protein B, found in Clostridium perfringens (strain 13 / Type A).